Here is a 512-residue protein sequence, read N- to C-terminus: Probable DNA ligase (512 aa).

Aspartate 217 lines the ATP pocket. Lysine 219 (N6-AMP-lysine intermediate) is an active-site residue. ATP is bound by residues arginine 224, arginine 239, glutamate 268, phenylalanine 306, arginine 377, and lysine 383.

This sequence belongs to the ATP-dependent DNA ligase family. Mg(2+) is required as a cofactor.

It catalyses the reaction ATP + (deoxyribonucleotide)n-3'-hydroxyl + 5'-phospho-(deoxyribonucleotide)m = (deoxyribonucleotide)n+m + AMP + diphosphate.. In terms of biological role, DNA ligase that seals nicks in double-stranded DNA during DNA replication, DNA recombination and DNA repair. This Beutenbergia cavernae (strain ATCC BAA-8 / DSM 12333 / CCUG 43141 / JCM 11478 / NBRC 16432 / NCIMB 13614 / HKI 0122) protein is Probable DNA ligase.